A 332-amino-acid polypeptide reads, in one-letter code: Adenosine deaminase (332 aa).

Positions 12 and 14 each coordinate Zn(2+). Positions 14, 16, and 170 each coordinate substrate. His197 is a Zn(2+) binding site. The active-site Proton donor is the Glu200. Position 278 (Asp278) interacts with Zn(2+).

It belongs to the metallo-dependent hydrolases superfamily. Adenosine and AMP deaminases family. Adenosine deaminase subfamily. Zn(2+) is required as a cofactor.

The enzyme catalyses adenosine + H2O + H(+) = inosine + NH4(+). It catalyses the reaction 2'-deoxyadenosine + H2O + H(+) = 2'-deoxyinosine + NH4(+). In terms of biological role, catalyzes the hydrolytic deamination of adenosine and 2-deoxyadenosine. This chain is Adenosine deaminase, found in Clostridium perfringens (strain SM101 / Type A).